Reading from the N-terminus, the 94-residue chain is MTICDTVDQYTIMSGDRLKIKDLLCNRLTECGWRNEVRLLCRNILLEKSANNSVSVDQLISEVTPKARTLVPDAVKKELLMKIRTILAETDEDN.

This sequence belongs to the ENY2 family. Component of the nuclear pore complex (NPC)-associated AMEX complex (anchoring and mRNA export complex), composed of at least e(y)2 and xmas-2. Component of the SAGA transcription coactivator-HAT complexes, at least composed of Ada2b, e(y)2, Pcaf/Gcn5, Taf10 and Nipped-A/Trrap. Within the SAGA complex, e(y)2, Sgf11, and not/nonstop form an additional subcomplex of SAGA called the DUB module (deubiquitination module). Component of the THO complex, composed of at least e(y)2, HPR1, THO2, THOC5, THOC6 and THOC7. Interacts with e(y)1. Interacts with su(Hw) (via zinc fingers). Interacts with xmas-2; required for localization to the nuclear periphery. Interacts with the nuclear pore complex (NPC).

The protein localises to the nucleus. It is found in the nucleoplasm. It localises to the cytoplasm. Its function is as follows. Involved in mRNA export coupled transcription activation by association with both the AMEX and the SAGA complexes. The SAGA complex is a multiprotein complex that activates transcription by remodeling chromatin and mediating histone acetylation and deubiquitination. Within the SAGA complex, participates in a subcomplex that specifically deubiquitinates histone H2B. The SAGA complex is recruited to specific gene promoters by activators, where it is required for transcription. Required for nuclear receptor-mediated transactivation. Involved in transcription elongation by recruiting the THO complex onto nascent mRNA. The AMEX complex functions in docking export-competent ribonucleoprotein particles (mRNPs) to the nuclear entrance of the nuclear pore complex (nuclear basket). AMEX participates in mRNA export and accurate chromatin positioning in the nucleus by tethering genes to the nuclear periphery. This Drosophila grimshawi (Hawaiian fruit fly) protein is Enhancer of yellow 2 transcription factor.